The chain runs to 427 residues: Tol-Pal system protein TolB (427 aa).

An N-terminal signal peptide occupies residues 1–23 (MKLIARLMSMCAVLFFAINSAYA).

It belongs to the TolB family. In terms of assembly, the Tol-Pal system is composed of five core proteins: the inner membrane proteins TolA, TolQ and TolR, the periplasmic protein TolB and the outer membrane protein Pal. They form a network linking the inner and outer membranes and the peptidoglycan layer.

It is found in the periplasm. Part of the Tol-Pal system, which plays a role in outer membrane invagination during cell division and is important for maintaining outer membrane integrity. The sequence is that of Tol-Pal system protein TolB from Actinobacillus succinogenes (strain ATCC 55618 / DSM 22257 / CCUG 43843 / 130Z).